The following is a 723-amino-acid chain: Tryptophan 2-monooxygenase (723 aa).

Residues S218, E238, R246, and R266 each contribute to the FMN site. R266 serves as a coordination point for substrate.

The protein belongs to the tryptophan 2-monooxygenase family. Requires FMN as cofactor.

It carries out the reaction L-tryptophan + O2 = indole-3-acetamide + CO2 + H2O. It functions in the pathway plant hormone metabolism; auxin biosynthesis. The sequence is that of Tryptophan 2-monooxygenase (iaaM) from Allorhizobium ampelinum (strain ATCC BAA-846 / DSM 112012 / S4) (Agrobacterium vitis (strain S4)).